The primary structure comprises 356 residues: Histidinol-phosphate aminotransferase (356 aa).

Lys217 is modified (N6-(pyridoxal phosphate)lysine).

The protein belongs to the class-II pyridoxal-phosphate-dependent aminotransferase family. Histidinol-phosphate aminotransferase subfamily. As to quaternary structure, homodimer. Requires pyridoxal 5'-phosphate as cofactor.

The catalysed reaction is L-histidinol phosphate + 2-oxoglutarate = 3-(imidazol-4-yl)-2-oxopropyl phosphate + L-glutamate. The protein operates within amino-acid biosynthesis; L-histidine biosynthesis; L-histidine from 5-phospho-alpha-D-ribose 1-diphosphate: step 7/9. The protein is Histidinol-phosphate aminotransferase of Chromobacterium violaceum (strain ATCC 12472 / DSM 30191 / JCM 1249 / CCUG 213 / NBRC 12614 / NCIMB 9131 / NCTC 9757 / MK).